Consider the following 370-residue polypeptide: MPAITVKPLTPPAGSAIDFGAVITDVDLEHLTDGDFSTIRSALYTHLVVVLKNQHQLTPKAQYELTRRFDPSATQYGHGKTLDAKRSILHPDLKTIPHQPQVQVIGHGFIDSYEGLENITLKHPHHRTFHRDPIPQEDDYDSTRFYRWHIDAALYGLNPPIVTTLLAVKVPGGRRQTVRYDDGSGETMDVPLGTTAFASGERMFELLSEEDKEFALSSRVEYAPHPYIWMSPARSLPTGLGLHSDDLELPLSELPPIDESAIQILPMVWKNPATGKPALQIHPSAVRKIHCGDGTVIDDLKKVREIAYKLQRPAISPQYVYAHDWEEGDLVLFHNRGVLHSVVGAFGEGEVRLFRQCNLAAGEGVVPYRE.

H107 lines the substrate pocket. Positions 149 and 151 each coordinate Fe cation. 2-oxoglutarate-binding residues include T195 and W325. H340 contributes to the Fe cation binding site. R352 contacts 2-oxoglutarate.

This sequence belongs to the TfdA dioxygenase family. Fe(2+) serves as cofactor. Post-translationally, glycosylated. Is subject to both N- and O-linked glycosylation. Phosphorylated.

It is found in the cytoplasm. The protein localises to the cytosol. The enzyme catalyses xanthine + 2-oxoglutarate + O2 = urate + succinate + CO2. Cu(2+) and Zn(2+) completely inhibit the xanthine dioxygenase activity, whereas Co(2+), Mn(2+), and Ni(2+) partially inhibit the activity. The inactive metal ions are presumed to compete for the Fe(2+)-binding site. N-oxalylglycine (NOG), a known inhibitor of several Fe(2+)/alpha-ketoglutarate-dependent dioxygenase family members, competes with alpha-ketoglutarate and provides a Ki of 0.12 uM for inhibition. 6,8-dihydroxypurine acts as a slow-binding competitive inhibitor. The thiol-specific inhibitors 5,5'-dithiobis(2-nitrobenzoic acid) (DTNB) and iodoacetamide, inhibit also the catalytic activity. In terms of biological role, alpha-ketoglutarate-dependent xanthine dioxygenase is a non-heme mononuclear Fe(2+) enzyme that decarboxylates alpha-ketoglutarate to succinate and CO(2) while hydroxylating xanthine to generate uric acid. Allows xanthine utilization as a nitrogen source. Whereas xanA is highly specific for xanthine, alpha-ketoadipic acid can replace alpha-ketoglutarate as a cosubstrate. Exhibits ferroxidase activity in the absence of substrates. This is Alpha-ketoglutarate-dependent xanthine dioxygenase xanA from Emericella nidulans (Aspergillus nidulans).